A 1857-amino-acid polypeptide reads, in one-letter code: Ankyrin repeat domain-containing protein 31 (1857 aa).

Disordered stretches follow at residues Met1 to Glu30 and Ser195 to Ser215. The span at Ser195–Ser207 shows a compositional bias: polar residues. ANK repeat units lie at residues Phe475 to Gln504, Asp508 to Val537, and Tyr541 to Phe570. Polar residues predominate over residues Lys676–Asn691. Disordered stretches follow at residues Lys676–Arg711, Val813–Ala844, Arg995–His1038, Lys1046–Phe1065, and Ala1075–Arg1137. Residues Val692 to Lys704 are compositionally biased toward basic residues. Positions Thr814–Asn839 are enriched in polar residues. Basic and acidic residues predominate over residues Ser1008–Tyr1019. Polar residues predominate over residues Gly1023–Pro1032. The span at Gln1082–Phe1136 shows a compositional bias: basic and acidic residues. ANK repeat units lie at residues Lys1162 to Leu1191, Ala1195 to Cys1224, and Asp1228 to Gln1257. Disordered regions lie at residues Asn1457–Gln1479, Gly1540–Ser1570, Asp1609–Leu1640, and Ala1663–Arg1697. Positions Ala1555–Ser1570 are enriched in polar residues. The span at Ala1663–Gln1683 shows a compositional bias: low complexity. Residues Lys1687 to Cys1782 enclose the RAMA domain.

Interacts with REC114; the interaction is direct. Interacts with IHO1. Present in meiotic cells (at protein level).

The protein resides in the nucleus. Its subcellular location is the chromosome. Its function is as follows. Required for DNA double-strand breaks (DSBs) formation during meiotic recombination. Regulates the spatial and temporal patterns of pre-DSB recombinosome assembly and recombination activity by acting as a scaffold that anchors REC114 and other factors to specific genomic locations, thereby regulating DSB formation. Plays a key role in recombination in the pseudoautosomal regions of sex chromosomes. The chain is Ankyrin repeat domain-containing protein 31 from Mus musculus (Mouse).